The primary structure comprises 100 residues: Urease subunit gamma (100 aa).

Belongs to the urease gamma subunit family. As to quaternary structure, heterotrimer of UreA (gamma), UreB (beta) and UreC (alpha) subunits. Three heterotrimers associate to form the active enzyme.

It localises to the cytoplasm. The catalysed reaction is urea + 2 H2O + H(+) = hydrogencarbonate + 2 NH4(+). The protein operates within nitrogen metabolism; urea degradation; CO(2) and NH(3) from urea (urease route): step 1/1. This Staphylococcus saprophyticus subsp. saprophyticus (strain ATCC 15305 / DSM 20229 / NCIMB 8711 / NCTC 7292 / S-41) protein is Urease subunit gamma.